We begin with the raw amino-acid sequence, 326 residues long: L-lactate dehydrogenase (326 aa).

NAD(+)-binding positions include valine 20, aspartate 41, lysine 46, tyrosine 71, and 85-86; that span reads GA. 2 residues coordinate substrate: glutamine 88 and arginine 94. NAD(+) contacts are provided by residues serine 107, 124–126, and serine 149; that span reads AAN. 126-129 is a substrate binding site; that stretch reads NPVD. 154–157 provides a ligand contact to substrate; sequence DTAR. Beta-D-fructose 1,6-bisphosphate is bound by residues arginine 159, 171–174, and histidine 174; that span reads RSVH. The Proton acceptor role is filled by histidine 181. At tyrosine 226 the chain carries Phosphotyrosine. Residue threonine 235 participates in substrate binding.

Belongs to the LDH/MDH superfamily. LDH family. In terms of assembly, homotetramer.

It localises to the cytoplasm. The enzyme catalyses (S)-lactate + NAD(+) = pyruvate + NADH + H(+). The protein operates within fermentation; pyruvate fermentation to lactate; (S)-lactate from pyruvate: step 1/1. Its activity is regulated as follows. Allosterically activated by fructose 1,6-bisphosphate (FBP) alone under acidic conditions, while it requires additional activation factors such as divalent cations (Mn(2+)) under neutral conditions. Under acidic conditions, Mn(2+) is an inhibitor in the absence of fructose 1,6-bisphosphate (FBP). In case of L.casei, L-LDH binds four fructose 1,6-bisphosphate (FBP) molecules per tetramer, while usual allosteric L-LDH binds only two fructose 1,6-bisphosphate (FBP) molecules per tetramer. Catalyzes the conversion of lactate to pyruvate. This chain is L-lactate dehydrogenase, found in Lacticaseibacillus casei (Lactobacillus casei).